The chain runs to 322 residues: NADH-quinone oxidoreductase subunit H (322 aa).

The next 8 membrane-spanning stretches (helical) occupy residues 15-35, 82-102, 114-134, 149-169, 186-206, 243-263, 265-285, and 302-322; these read ILHI…LSIL, IFIL…PTIP, IGIL…LFAG, ASAQ…GVIA, VWNV…GIAL, ISII…YFGF, GSSF…FILI, and WKIC…FILI.

The protein belongs to the complex I subunit 1 family. As to quaternary structure, NDH-1 is composed of 13 different subunits. Subunits NuoA, H, J, K, L, M, N constitute the membrane sector of the complex.

Its subcellular location is the cell membrane. The enzyme catalyses a quinone + NADH + 5 H(+)(in) = a quinol + NAD(+) + 4 H(+)(out). Its function is as follows. NDH-1 shuttles electrons from NADH, via FMN and iron-sulfur (Fe-S) centers, to quinones in the respiratory chain. The immediate electron acceptor for the enzyme in this species is believed to be ubiquinone. Couples the redox reaction to proton translocation (for every two electrons transferred, four hydrogen ions are translocated across the cytoplasmic membrane), and thus conserves the redox energy in a proton gradient. This subunit may bind ubiquinone. The polypeptide is NADH-quinone oxidoreductase subunit H (Buchnera aphidicola subsp. Schizaphis graminum (strain Sg)).